Consider the following 265-residue polypeptide: Eukaryotic translation initiation factor 3 subunit J (265 aa).

The disordered stretch occupies residues 1–71; that stretch reads MSWDDEAING…KESSADRALL (71 aa). A compositionally biased stretch (acidic residues) spans 23–32; that stretch reads WDAEIGDDEP. Over residues 42 to 71 the composition is skewed to basic and acidic residues; sequence EEKKPAPKPKKEQPKKVKKGKESSADRALL. A Phosphoserine modification is found at S65. Residue T75 is modified to Phosphothreonine. S92 is modified (phosphoserine). Positions 219–265 are disordered; that stretch reads VRGGTATGGAGKKKVKGKTNLGGAFKKDQDFDLDGPDDFEFGDDDFM. R220 is modified (omega-N-methylarginine). Acidic residues predominate over residues 249–265; it reads FDLDGPDDFEFGDDDFM.

This sequence belongs to the eIF-3 subunit J family. As to quaternary structure, probable component of the eukaryotic translation initiation factor 3 (eIF-3) complex. Is not part of the eIF-3 core complex, with which it is associated in substochiometric amounts.

It localises to the cytoplasm. Functionally, component of the eukaryotic translation initiation factor 3 (eIF-3) complex, which is involved in protein synthesis of a specialized repertoire of mRNAs and, together with other initiation factors, stimulates binding of mRNA and methionyl-tRNAi to the 40S ribosome. The eIF-3 complex specifically targets and initiates translation of a subset of mRNAs involved in cell proliferation. The chain is Eukaryotic translation initiation factor 3 subunit J from Saccharomyces cerevisiae (strain ATCC 204508 / S288c) (Baker's yeast).